The sequence spans 375 residues: Succinyl-diaminopimelate desuccinylase (375 aa).

His-66 contacts Zn(2+). Asp-68 is a catalytic residue. A Zn(2+)-binding site is contributed by Asp-99. Glu-133 (proton acceptor) is an active-site residue. Residues Glu-134, Glu-162, and His-348 each contribute to the Zn(2+) site.

It belongs to the peptidase M20A family. DapE subfamily. Homodimer. It depends on Zn(2+) as a cofactor. Co(2+) serves as cofactor.

It carries out the reaction N-succinyl-(2S,6S)-2,6-diaminopimelate + H2O = (2S,6S)-2,6-diaminopimelate + succinate. Its pathway is amino-acid biosynthesis; L-lysine biosynthesis via DAP pathway; LL-2,6-diaminopimelate from (S)-tetrahydrodipicolinate (succinylase route): step 3/3. In terms of biological role, catalyzes the hydrolysis of N-succinyl-L,L-diaminopimelic acid (SDAP), forming succinate and LL-2,6-diaminopimelate (DAP), an intermediate involved in the bacterial biosynthesis of lysine and meso-diaminopimelic acid, an essential component of bacterial cell walls. The chain is Succinyl-diaminopimelate desuccinylase from Serratia proteamaculans (strain 568).